A 311-amino-acid chain; its full sequence is E3 ubiquitin-protein ligase RNF126 (311 aa).

A2 bears the N-acetylalanine mark. At S5 the chain carries Phosphoserine. The interval 5-100 (SPHPGRYFCH…FEIPTFPPGA (96 aa)) is required for interaction with BAG6. Residues C13, C16, C29, and C32 each coordinate Zn(2+). Residues 13–32 (CHCCSVEIVPRLPDYICPRC) form a C4-type zinc finger. 2 disordered regions span residues 42–64 (EETR…SRPP) and 94–132 (PTFP…ARLT). The span at 47–61 (TENGSAPSTAPTDQS) shows a compositional bias: polar residues. Over residues 103 to 116 (DDGRDPESRRERDH) the composition is skewed to basic and acidic residues. Positions 117 to 132 (PSRHRYGARQPRARLT) are enriched in basic residues. Positions 200 to 304 (TGPPPADKEK…SSSSSSSPSN (105 aa)) are sufficient for interaction with AICDA. An RING-type zinc finger spans residues 229–270 (CPVCKDDYALGERVRQLPCNHLFHDGCIVPWLEQHDSCPVCR). Positions 277 to 311 (NTATNPPGLTGVSFSSSSSSSSSSSPSNENATSNS) are disordered. Over residues 289–311 (SFSSSSSSSSSSSPSNENATSNS) the composition is skewed to low complexity.

As to quaternary structure, interacts with CCDC50, EGFR, FLT3 and SCAMP3. Interacts with BAG6 (via ubiquitin-like domain); required for BAG6-dependent ubiquitination of proteins mislocalized to the cytosol. Interacts with CDKN1A. Interacts with AICDA. In terms of processing, ubiquitinated. May undergo autoubiquitination. In terms of tissue distribution, highly expressed in liver and testis.

The protein localises to the cytoplasm. The protein resides in the nucleus. The enzyme catalyses S-ubiquitinyl-[E2 ubiquitin-conjugating enzyme]-L-cysteine + [acceptor protein]-L-lysine = [E2 ubiquitin-conjugating enzyme]-L-cysteine + N(6)-ubiquitinyl-[acceptor protein]-L-lysine.. It functions in the pathway protein modification; protein ubiquitination. Its function is as follows. E3 ubiquitin-protein ligase that mediates ubiquitination oF target proteins. Depending on the associated E2 ligase, mediates 'Lys-27'-, 'Lys-29'-, 'Lys-48'- and/or 'Lys-63'-linked polyubiquitination of substrates. Part of a BAG6-dependent quality control process ensuring that proteins of the secretory pathway that are mislocalized to the cytosol are degraded by the proteasome. Probably acts by providing the ubiquitin ligase activity associated with the BAG6 complex and be responsible for ubiquitination of the hydrophobic mislocalized proteins and their targeting to the proteasome. May also play a role in the endosomal recycling of IGF2R, the cation-independent mannose-6-phosphate receptor. May play a role in the endosomal sorting and degradation of several membrane receptors including EGFR, FLT3, MET and CXCR4, by mediating their ubiquitination. By ubiquitinating CDKN1A/p21 and targeting it for degradation, may also promote cell proliferation. May monoubiquitinate AICDA. Acts as a regulator of DNA repair by mediating 'Lys-27'- and 'Lys-29'-linked polyubiquitination of MRE11, thereby promoting the exonuclease activity of MRE11. The chain is E3 ubiquitin-protein ligase RNF126 from Homo sapiens (Human).